The chain runs to 428 residues: Putative oxidoreductase YteT (428 aa).

Residues 1–23 (MKNIVFCGLSSRAFSMFIKPLME) form the signal peptide.

It belongs to the Gfo/Idh/MocA family.

May play a role in the degradation of type I rhamnogalacturonan derived from plant cell walls. This is Putative oxidoreductase YteT (yteT) from Bacillus subtilis (strain 168).